We begin with the raw amino-acid sequence, 497 residues long: uncharacterized protein (497 aa).

The interval 474-497 is disordered; the sequence is DPRNPFSNGKPSGWSDEDVAWLKR. Residues 488–497 are compositionally biased toward acidic residues; the sequence is SDEDVAWLKR.

This is an uncharacterized protein from Bacillus anthracis.